The primary structure comprises 257 residues: 8-demethyl-8-aminoriboflavin-5'-phosphate synthase (257 aa).

FMN-binding positions include 11-13, 19-21, 91-94, 132-136, and Y240; these read TLR, SQT, ITLN, and CGNED.

The protein belongs to the SsuE family. In terms of assembly, homotetramer.

The catalysed reaction is FMN + L-glutamate + 3 A + O2 + H2O = 8-amino-8-demethylriboflavin 5'-phosphate + 2-oxoglutarate + 3 AH2 + CO2 + H(+). It participates in antibiotic biosynthesis. Its function is as follows. Involved in the biosynthesis of the riboflavin analog antibiotic roseoflavin (3,8-dimethylamino-riboflavin). Catalyzes the site-specific substitution of the C-8 methyl group of riboflavin-5'-phosphate (FMN) by an amino group to yield 8-amino-8-demethylriboflavin 5'-phosphate, via a combined oxidation, decarboxylation and transamination reaction. The catalysis is initiated by an oxidation step in which the C-8 methyl group on the dimethylbenzene ring of FMN is converted to a formyl group to yield the 8-demethyl-8-formylriboflavin-5'-phosphate (OHC-RP) intermediate. In the presence of thiamine, the formyl group is oxidized into a carboxyl group to yield the 8-demethyl-8-carboxyriboflavin-5'-phosphate (HO2C-RP) intermediate. Finally, in the presence of L-glutamate as an amino donor, decarboxylation and aminotransfer occur, resulting in production of 8-demethyl-8-aminoriboflavin-5'-phosphate. Addition of NAD (but not NADP) to the reaction increases the yield 1.7-fold. The reaction also proceeds without the addition of any electron acceptor, and it is possible that molecular oxygen serves this role. In Streptomyces davaonensis (strain DSM 101723 / JCM 4913 / KCC S-0913 / 768), this protein is 8-demethyl-8-aminoriboflavin-5'-phosphate synthase.